The primary structure comprises 430 residues: Probable proton-coupled zinc antiporter SLC30A4 (430 aa).

Residues 1–113 (MAGPGAWKRL…LLKQRKVKTR (113 aa)) lie on the Cytoplasmic side of the membrane. S36 is subject to Phosphoserine. A helical transmembrane segment spans residues 114-134 (LTIAAVLYLLFMIGELVGGYM). The Lumenal segment spans residues 135-143 (ANSLAIMTD). Residues 144–164 (ALHMLTDLSAIILTLLALWLS) traverse the membrane as a helical segment. Zn(2+) contacts are provided by H146 and D150. The Cytoplasmic portion of the chain corresponds to 165–178 (SKSPTRRFTFGFHR). A helical membrane pass occupies residues 179–199 (LEVLSAMISVMLVYVLMGFLL). At 200 to 216 (YEAVQRTIHMNYEINGD) the chain is on the lumenal side. Residues 217–237 (VMLITAAVGVAVNVIMGFLLN) traverse the membrane as a helical segment. Residues 238–275 (QSGHHHSHAHSHSLPSNSPSMVSSGHNHGQDSLAVRAA) lie on the Cytoplasmic side of the membrane. The interval 240–265 (GHHHSHAHSHSLPSNSPSMVSSGHNH) is zinc binding. The disordered stretch occupies residues 245 to 264 (HAHSHSLPSNSPSMVSSGHN). Over residues 249–263 (HSLPSNSPSMVSSGH) the composition is skewed to low complexity. Residues 276–296 (FVHALGDLVQSVGVLIAAYII) form a helical membrane-spanning segment. H278 and D282 together coordinate Zn(2+). Residues 297–311 (RFKPEYKIADPICTY) lie on the Lumenal side of the membrane. The chain crosses the membrane as a helical span at residues 312–332 (IFSLLVAFTTFRIIWDTVVII). Over 333–430 (LEGVPSHLNV…TCANCHSSST (98 aa)) the chain is Cytoplasmic.

It belongs to the cation diffusion facilitator (CDF) transporter (TC 2.A.4) family. SLC30A subfamily. Homodimerization could regulate efficiency for zinc transport. Interacts with TMEM163. Widely expressed. Highly expressed in the brain and in mammary epithelial cell lines.

The protein resides in the endosome membrane. It is found in the late endosome membrane. The protein localises to the lysosome membrane. It catalyses the reaction Zn(2+)(in) + 2 H(+)(out) = Zn(2+)(out) + 2 H(+)(in). Its function is as follows. Probable proton-coupled zinc ion antiporter mediating zinc import from cytoplasm potentially into the endocytic compartment. Controls zinc deposition in milk. The protein is Probable proton-coupled zinc antiporter SLC30A4 of Mus musculus (Mouse).